We begin with the raw amino-acid sequence, 210 residues long: MKLPALHLLFLGFICLARSQDNDENVRRIMKEMEVIPEILDEPPRELLRIKYDNTIDIEEGKTYTPTELKFQPRLDWNADPESFYTVLMICPDAPNRENPMYRSWLHWLVVNVPGLDIMKGQPISEYFGPLPPKDSGIQRYLILVYQQSDKLDFDEKKMELSNADGHSNFDVMKFTQKYEMGSPVAGNIFQSRWDEYVPELMKTLYGVSE.

Residues 1-19 (MKLPALHLLFLGFICLARS) form the signal peptide.

It belongs to the phosphatidylethanolamine-binding protein family. Cells at the bases of a few scattered sensilla on the posterior surface of the antenna.

Its subcellular location is the secreted. In Drosophila melanogaster (Fruit fly), this protein is Putative odorant-binding protein A5 (a5).